Consider the following 721-residue polypeptide: Glucans biosynthesis glucosyltransferase H (721 aa).

7 helical membrane-spanning segments follow: residues 54–74 (LIMV…YQVL), 85–105 (VVLV…VSAL), 404–424 (GIGA…GILI), 458–478 (FAGT…LVLI), 493–513 (FGGV…MMVF), 548–568 (YALP…VSWP), and 569–589 (LLLW…VALL).

The protein belongs to the glycosyltransferase 2 family. OpgH subfamily.

The protein resides in the cell inner membrane. It participates in glycan metabolism; osmoregulated periplasmic glucan (OPG) biosynthesis. In terms of biological role, involved in the biosynthesis of osmoregulated periplasmic glucans (OPGs). This is Glucans biosynthesis glucosyltransferase H from Rhodopseudomonas palustris (strain TIE-1).